Reading from the N-terminus, the 479-residue chain is Anaerobic nitric oxide reductase flavorubredoxin (479 aa).

The tract at residues 30–210 (LRGSSYNSYL…PFSRLVTPKI (181 aa)) is zinc metallo-hydrolase. Fe cation-binding residues include histidine 79, glutamate 81, aspartate 83, histidine 147, aspartate 166, and histidine 227. Residues 254-393 (ITIFYDTMSN…LCRQHGRDIA (140 aa)) enclose the Flavodoxin-like domain. FMN contacts are provided by residues 260 to 264 (TMSNN) and 342 to 369 (AFGS…EMSL). In terms of domain architecture, Rubredoxin-like spans 423–474 (GPKMQCSVCQWIYDPAQGEPLQDVAPGTPWSDVPDNFLCPECSLGKDVFDVL). Residues cysteine 428, cysteine 431, cysteine 461, and cysteine 464 each coordinate Fe cation.

It in the N-terminal section; belongs to the zinc metallo-hydrolase group 3 family. As to quaternary structure, homotetramer. Fe cation is required as a cofactor. It depends on FMN as a cofactor.

It is found in the cytoplasm. Its pathway is nitrogen metabolism; nitric oxide reduction. Its function is as follows. Anaerobic nitric oxide reductase; uses NADH to detoxify nitric oxide (NO), protecting several 4Fe-4S NO-sensitive enzymes. Has at least 2 reductase partners, only one of which (NorW, flavorubredoxin reductase) has been identified. NO probably binds to the di-iron center; electrons enter from the NorW at rubredoxin and are transferred sequentially to the FMN center and the di-iron center. Also able to function as an aerobic oxygen reductase. The protein is Anaerobic nitric oxide reductase flavorubredoxin of Salmonella choleraesuis (strain SC-B67).